The following is a 445-amino-acid chain: MSEYLSVTTLTKYIKYKFDQDPHLQSILLKGELSNFKKHSSGHLYFNVKDKDSVISAMMFKGNANQLTFEPKEGDEVLLEARVSVYERRGNYQIYVNKMELDGIGNLYQKLEQLKQKLKKEGFFNNEHKKPIPRFPKKIAILTASTGAAIRDIQSTINSRYPLAEKIQISTLVQGTQAKEDIIKNIKYADSLGVDTIIVGRGGGSIEDLWNFNEEDVVKAIFECQTPIISAVGHETDFTLSDFVADVRAATPTQAAVMATPDQYELMQQIKQYQFSLSRYIKQYLEKQYKQLDHLASYYKFKQPSLLYDQQIQRKDDLERQLTQLLLSKIENKKYQLKVLHQNFNVKTLNQTILQNKRQLVNVKNRLSNLTMKNIHNNKLEFKNKVELLNNLSPTNTMLRGYSIINKDDKVITSTQDLSKDDEITLAMKDGNVDAIVKKVRCEHE.

The protein belongs to the XseA family. In terms of assembly, heterooligomer composed of large and small subunits.

The protein resides in the cytoplasm. It catalyses the reaction Exonucleolytic cleavage in either 5'- to 3'- or 3'- to 5'-direction to yield nucleoside 5'-phosphates.. Bidirectionally degrades single-stranded DNA into large acid-insoluble oligonucleotides, which are then degraded further into small acid-soluble oligonucleotides. This Staphylococcus haemolyticus (strain JCSC1435) protein is Exodeoxyribonuclease 7 large subunit.